A 745-amino-acid chain; its full sequence is MEHADQYSWIIPFVPLPIPILIGMGLLLFPTATKRLLLFPTATKNLRRMWAFPNILLLSIVMIFSLDLSIQQINGSSIYQYVWSWTINNDFSFEFGYFIDSLTSIMSILITTVGIFVLIYSDNYMSHDEGYLRFFAYMSLFNTSMLGLVTSCNLIQIYIFWELVGMCSYLLIGFWFTRPAAANACQKAFVTNRIGDFGLLLGILGFYWITGSFEFQDLFEIFNNLIYNNEVHFLFVTLCASLLFAGAVAKSAQFPLHVWLPDAMEGPTPISALIHAATMVAAGIFLVARLFPLFIVIPYIMNLISLIGIITVLLGATLALAQNDIKRGLAYSTMSQLGYMMLALGMGSYRAALFHLITHAYSKALLFLASGSIIHSMEAIVGYSPEKSQNMVFMGGLRKHVPVTQIAFLVGTLSLCGIPPLACFWSKDEILSDSWLYSPIFAIIAWSTAGLTAFYMFRIYLLTFEGHLNVHFQKYSGKKSSSFYSIKLWGKEEQKIINRNFRLFPLLTLTMNNNEQPYTIGGKKEARITITNFGYKKAFSYPHESDNTMLFPMLILLLFTLFVGAIAIPFNQEGMHLDILSKLLTPSINLLHQNSNDFEDSYQFFKNATFSVSIACFGIFTAFLLYKPFYSSVQNLNLLNSFVKRGPKRILLDKMIYLIYDWSYNRGYIDMFYSISLTKGIRGLAELTHFFDRRVIDGITNGVGITSFFVGESVKYLGGSRISFYLLLYLVYVFIFLVISYFILF.

A run of 16 helical transmembrane segments spans residues 9-29 (WIIP…LLLF), 50-70 (WAFP…DLSI), 99-119 (IDSL…FVLI), 135-155 (FAYM…CNLI), 157-177 (IYIF…FWFT), 194-214 (IGDF…GSFE), 229-249 (NEVH…GAVA), 268-288 (TPIS…FLVA), 290-310 (LFPL…IGII), 337-357 (LGYM…FHLI), 364-384 (ALLF…VGYS), 406-426 (IAFL…CFWS), 435-455 (WLYS…TAFY), 550-570 (LFPM…AIPF), 610-630 (FSVS…KPFY), and 724-744 (FYLL…YFIL).

It belongs to the complex I subunit 5 family. NDH is composed of at least 16 different subunits, 5 of which are encoded in the nucleus.

The protein localises to the plastid. The protein resides in the chloroplast thylakoid membrane. The enzyme catalyses a plastoquinone + NADH + (n+1) H(+)(in) = a plastoquinol + NAD(+) + n H(+)(out). It catalyses the reaction a plastoquinone + NADPH + (n+1) H(+)(in) = a plastoquinol + NADP(+) + n H(+)(out). In terms of biological role, NDH shuttles electrons from NAD(P)H:plastoquinone, via FMN and iron-sulfur (Fe-S) centers, to quinones in the photosynthetic chain and possibly in a chloroplast respiratory chain. The immediate electron acceptor for the enzyme in this species is believed to be plastoquinone. Couples the redox reaction to proton translocation, and thus conserves the redox energy in a proton gradient. The chain is NAD(P)H-quinone oxidoreductase subunit 5, chloroplastic (ndhF) from Gossypium barbadense (Sea Island cotton).